Here is a 143-residue protein sequence, read N- to C-terminus: Putative pre-16S rRNA nuclease (143 aa).

This sequence belongs to the YqgF nuclease family.

It is found in the cytoplasm. Could be a nuclease involved in processing of the 5'-end of pre-16S rRNA. The sequence is that of Putative pre-16S rRNA nuclease from Salinibacter ruber (strain DSM 13855 / M31).